A 230-amino-acid chain; its full sequence is Orotidine 5'-phosphate decarboxylase (230 aa).

Substrate contacts are provided by residues Asp10, Lys32, 59-68 (DLKYHDIPNT), Thr119, Arg180, Gln189, Gly209, and Arg210. Lys61 functions as the Proton donor in the catalytic mechanism.

This sequence belongs to the OMP decarboxylase family. Type 1 subfamily. In terms of assembly, homodimer.

The catalysed reaction is orotidine 5'-phosphate + H(+) = UMP + CO2. It participates in pyrimidine metabolism; UMP biosynthesis via de novo pathway; UMP from orotate: step 2/2. Its function is as follows. Catalyzes the decarboxylation of orotidine 5'-monophosphate (OMP) to uridine 5'-monophosphate (UMP). In Haemophilus influenzae (strain ATCC 51907 / DSM 11121 / KW20 / Rd), this protein is Orotidine 5'-phosphate decarboxylase.